A 148-amino-acid chain; its full sequence is Putative anti-anti-sigma factor Rv2638 (148 aa).

Residues 30 to 141 (LRATTDGSGA…PTVDTALGKG (112 aa)) form the STAS domain.

This sequence belongs to the anti-sigma-factor antagonist family. In terms of assembly, interacts with unphosphorylated OprA.

The protein is Putative anti-anti-sigma factor Rv2638 of Mycobacterium tuberculosis (strain ATCC 25618 / H37Rv).